We begin with the raw amino-acid sequence, 734 residues long: Ribosomal RNA large subunit methyltransferase K/L (734 aa).

The region spanning His49–Leu167 is the THUMP domain.

It belongs to the methyltransferase superfamily. RlmKL family.

It is found in the cytoplasm. The enzyme catalyses guanosine(2445) in 23S rRNA + S-adenosyl-L-methionine = N(2)-methylguanosine(2445) in 23S rRNA + S-adenosyl-L-homocysteine + H(+). It catalyses the reaction guanosine(2069) in 23S rRNA + S-adenosyl-L-methionine = N(2)-methylguanosine(2069) in 23S rRNA + S-adenosyl-L-homocysteine + H(+). Functionally, specifically methylates the guanine in position 2445 (m2G2445) and the guanine in position 2069 (m7G2069) of 23S rRNA. This chain is Ribosomal RNA large subunit methyltransferase K/L, found in Acinetobacter baumannii (strain ACICU).